Here is a 107-residue protein sequence, read N- to C-terminus: DNA polymerase delta subunit 4 (107 aa).

The PCNA-interaction protein motif (PIP box) motif lies at 1 to 16; sequence MGRKRFITDSYPVVKK. The segment at 1 to 40 is disordered; it reads MGRKRFITDSYPVVKKREGPPGHSKGELAPELGEDTQSLS. The segment covering 15–28 has biased composition (basic and acidic residues); that stretch reads KKREGPPGHSKGEL.

Belongs to the DNA polymerase delta subunit 4 family. Component of the tetrameric DNA polymerase delta complex (Pol-delta4), which consists of POLD1/p125, POLD2/p50, POLD3/p66/p68 and POLD4/p12, with POLD1 bearing DNA polymerase and 3' to 5' proofreading exonuclease activities. Within this complex, directly interacts with POLD1 and POLD2. Directly interacts with PCNA, as do POLD1 and POLD3; this interaction stimulates Pol-delta4 polymerase activity. As POLD1 and POLD2, directly interacts with WRNIP1; this interaction stimulates DNA polymerase delta-mediated DNA synthesis, independently of the presence of PCNA, possibly by increasing initiation frequency. Upon genotoxic stress induced by DNA damaging agents or by replication stress, POLD4 is proteolytically degraded and Pol-delta4 is converted into a trimeric form of the complex (Pol-delta3) that has an increased proofreading activity. The DNA polymerase delta complex interacts with POLDIP2; this interaction is probably mediated through direct binding to POLD2. Ubiquitinated; undergoes 'Lys-48'-linked polyubiquitination in response to UV irradiation or treatment with an alkylating agent, leading to proteasomal degradation. This modification is mediated, at least in part, by RNF8. Post-translationally, ubiquitinated; undergoes 'Lys-48'-linked ubiquitination in response to UV irradiation, leading to proteasomal degradation. This modification is partly mediated by RNF8 and by the DCX(DTL) E3 ubiquitin ligase complex (also called CRL4(CDT2)). Efficient degradation requires the presence of PCNA and is required for the inhibition of fork progression after DNA damage.

The protein localises to the nucleus. Functionally, as a component of the tetrameric DNA polymerase delta complex (Pol-delta4), plays a role in high fidelity genome replication and repair. Within this complex, increases the rate of DNA synthesis and decreases fidelity by regulating POLD1 polymerase and proofreading 3' to 5' exonuclease activity. Pol-delta4 participates in Okazaki fragment processing, through both the short flap pathway, as well as a nick translation system. Under conditions of DNA replication stress, required for the repair of broken replication forks through break-induced replication (BIR), a mechanism that may induce segmental genomic duplications of up to 200 kb. Involved in Pol-delta4 translesion synthesis (TLS) of templates carrying O6-methylguanine or abasic sites. Its degradation in response to DNA damage is required for the inhibition of fork progression and cell survival. The chain is DNA polymerase delta subunit 4 (Pold4) from Mus musculus (Mouse).